We begin with the raw amino-acid sequence, 378 residues long: UDP-4-amino-4-deoxy-L-arabinose--oxoglutarate aminotransferase (378 aa).

K182 is subject to N6-(pyridoxal phosphate)lysine.

Belongs to the DegT/DnrJ/EryC1 family. ArnB subfamily. In terms of assembly, homodimer. The cofactor is pyridoxal 5'-phosphate.

It catalyses the reaction UDP-4-amino-4-deoxy-beta-L-arabinose + 2-oxoglutarate = UDP-beta-L-threo-pentopyranos-4-ulose + L-glutamate. Its pathway is nucleotide-sugar biosynthesis; UDP-4-deoxy-4-formamido-beta-L-arabinose biosynthesis; UDP-4-deoxy-4-formamido-beta-L-arabinose from UDP-alpha-D-glucuronate: step 2/3. It participates in bacterial outer membrane biogenesis; lipopolysaccharide biosynthesis. Its function is as follows. Catalyzes the conversion of UDP-4-keto-arabinose (UDP-Ara4O) to UDP-4-amino-4-deoxy-L-arabinose (UDP-L-Ara4N). The modified arabinose is attached to lipid A and is required for resistance to polymyxin and cationic antimicrobial peptides. The sequence is that of UDP-4-amino-4-deoxy-L-arabinose--oxoglutarate aminotransferase from Aeromonas salmonicida (strain A449).